Here is an 812-residue protein sequence, read N- to C-terminus: Phospholipase D alpha 1 (812 aa).

A propeptide spanning residues 1-46 (MAQMLLHGTLHATIFEAASLSNPHRASGSAPKFIRKFVEGIEDTVG) is cleaved from the precursor. The region spanning 1–130 (MAQMLLHGTL…LNGEEIDRWL (130 aa)) is the C2 domain. Residue Asp-190 coordinates Ca(2+). Positions 330–368 (TMFTHHQKIVVVDHELPNQGSQQRRIVSFVGGLDLCDGR) constitute a PLD phosphodiesterase 1 domain. Catalysis depends on residues His-335, Lys-337, and Asp-342. His-335 is an a 1,2-diacyl-sn-glycero-3-phosphate binding site. Ca(2+)-binding residues include His-374 and His-408. A 1,2-diacyl-sn-glycero-3-phosphate-binding residues include Gln-524 and His-663. Positions 658 to 685 (FMIYVHTKMMIVDDEYIIIGSANINQRS) constitute a PLD phosphodiesterase 2 domain. Active-site residues include His-663, Lys-665, and Asp-670. Glu-724 provides a ligand contact to Ca(2+).

It belongs to the phospholipase D family. C2-PLD subfamily. As to quaternary structure, monomer. Requires Ca(2+) as cofactor. In terms of tissue distribution, expressed in leaves, roots, developing seeds and cultured cells.

The enzyme catalyses a 1,2-diacyl-sn-glycero-3-phosphocholine + H2O = a 1,2-diacyl-sn-glycero-3-phosphate + choline + H(+). In terms of biological role, hydrolyzes glycerol-phospholipids at the terminal phosphodiesteric bond. Plays an important role in various cellular processes. In Oryza sativa subsp. japonica (Rice), this protein is Phospholipase D alpha 1 (PLD1).